Reading from the N-terminus, the 963-residue chain is Importin-13 (963 aa).

HEAT repeat units follow at residues 24-54, 56-88, 95-135, 142-179, 194-231, 236-268, 276-325, 330-372, 375-438, 440-476, 487-522, 524-558, 562-600, 603-648, 676-716, 720-754, 761-803, 815-845, 860-893, and 897-931; these read ENVEKALHQLYYDPNIENKNLAQKWLMQAQA, PQAWHFSWQLLQPDKVPEIQYFGASALHIKISR, TDQY…LSMM, AVADMVRLFQAEDSPVDSQGRCLALLELLTVLPEEFQT, LAVECGAVFPLLEQLLQQPSSPSCVRQKVLKCFSSWVQ, LQDCEALIQAAFAALQDSELFDSSVEAIVNAIS, VNTL…ALLD, WQSF…DDIL, EAEK…YEML, AELLSNLYDKLGRLLTSSEEPYSWQHTEALLYGFQSI, VVPGLIGLIPRISISNVQLADTVMFTIGALSEWLAD, PVMINSVLPLVLHALGNPELSISSVSTLKKICREC, LPPYAANIVAVSQDVLMKQIHKTSQCMWLMQALGFLLSA, VEEI…SNLF, PVVV…VKTL, FAPMVPQLCEMLGRMYSTIPQASALDLTRQLVHIF, FPPI…ALKR, VKAVFQCAVLALKFPEAPTVKASCGFFTELL, EDGRMLLIAVLEAIGGQASRSLMDCFADILFALN, and FSLLSVWIKEALQAPGFPSARLSPEQKDTFSQQIL. The region spanning 45–111 is the Importin N-terminal domain; sequence AQKWLMQAQA…KAQLFTQITR (67 aa).

This sequence belongs to the importin beta family. As to quaternary structure, interacts with UBC9, RAN, RBM8A, eIF-1A and PAX6.

The protein resides in the cytoplasm. It is found in the nucleus. Functions in nuclear protein import as nuclear transport receptor. Serves as receptor for nuclear localization signals (NLS) in cargo substrates. Is thought to mediate docking of the importin/substrate complex to the nuclear pore complex (NPC) through binding to nucleoporin and the complex is subsequently translocated through the pore by an energy requiring, Ran-dependent mechanism. At the nucleoplasmic side of the NPC, Ran binds to the importin, the importin/substrate complex dissociates and importin is re-exported from the nucleus to the cytoplasm where GTP hydrolysis releases Ran. The directionality of nuclear import is thought to be conferred by an asymmetric distribution of the GTP- and GDP-bound forms of Ran between the cytoplasm and nucleus. Mediates the nuclear import of UBC9, the RBM8A/MAGOH complex, PAX6 and probably other members of the paired homeobox family. Also mediates nuclear export of eIF-1A, and the cytoplasmic release of eIF-1A is triggered by the loading of import substrates onto IPO13. In Bos taurus (Bovine), this protein is Importin-13 (IPO13).